Reading from the N-terminus, the 961-residue chain is Lon protease homolog, mitochondrial (961 aa).

The transit peptide at M1–G67 directs the protein to the mitochondrion. Disordered regions lie at residues G76–G103 and Q220–G262. One can recognise a Lon N-terminal domain in the interval L125 to F371. Residues K235–K244 are compositionally biased toward basic residues. A compositionally biased stretch (basic and acidic residues) spans K245 to L257. G524–T531 contacts ATP. In terms of domain architecture, Lon proteolytic spans V760–E951. Residues S784–S801 show a composition bias toward basic and acidic residues. The segment at S784–E803 is disordered. Residues S857 and K900 contribute to the active site.

This sequence belongs to the peptidase S16 family. As to quaternary structure, homohexamer. Organized in a ring with a central cavity. The ATP-binding and proteolytic domains (AP-domain) form a hexameric chamber, while the N-terminal domain is arranged as a trimer of dimers. DNA and RNA binding is stimulated by substrate and inhibited by ATP binding. Interacts with TWNK and mitochondrial DNA polymerase subunit POLG.

It is found in the mitochondrion matrix. The enzyme catalyses Hydrolysis of proteins in presence of ATP.. Its function is as follows. ATP-dependent serine protease that mediates the selective degradation of misfolded, unassembled or oxidatively damaged polypeptides as well as certain short-lived regulatory proteins in the mitochondrial matrix. Endogenous substrates include mitochondrial steroidogenic acute regulatory (StAR) protein, DELE1, helicase Twinkle (TWNK) and the large ribosomal subunit protein MRPL32/bL32m. MRPL32/bL32m is protected from degradation by LONP1 when it is bound to a nucleic acid (RNA), but TWNK is not. May also have a chaperone function in the assembly of inner membrane protein complexes. Participates in the regulation of mitochondrial gene expression and in the maintenance of the integrity of the mitochondrial genome. Binds to mitochondrial promoters and RNA in a single-stranded, site-specific, and strand-specific manner. May regulate mitochondrial DNA replication and/or gene expression using site-specific, single-stranded DNA binding to target the degradation of regulatory proteins binding to adjacent sites in mitochondrial promoters. This chain is Lon protease homolog, mitochondrial, found in Bos taurus (Bovine).